A 181-amino-acid polypeptide reads, in one-letter code: Adenine phosphoribosyltransferase (181 aa).

The protein belongs to the purine/pyrimidine phosphoribosyltransferase family. Homodimer.

It is found in the cytoplasm. It catalyses the reaction AMP + diphosphate = 5-phospho-alpha-D-ribose 1-diphosphate + adenine. It functions in the pathway purine metabolism; AMP biosynthesis via salvage pathway; AMP from adenine: step 1/1. Its function is as follows. Catalyzes a salvage reaction resulting in the formation of AMP, that is energically less costly than de novo synthesis. The sequence is that of Adenine phosphoribosyltransferase from Colwellia psychrerythraea (strain 34H / ATCC BAA-681) (Vibrio psychroerythus).